Reading from the N-terminus, the 352-residue chain is Dead end protein homolog 1 (352 aa).

RRM domains are found at residues 58 to 136 (SEVY…RSTE) and 138 to 218 (CELT…WLKP). An Omega-N-methylarginine modification is found at Arg336.

In terms of assembly, interacts with APOBEC3. Isoform 1 and isoform 2 are expressed in testis. Isoform 1 is expressed continuously in post natal (PN) testis although levels are low between PN1 to PN6. Isoform 2 is expressed from PN 20 onwards. Isoform 2 is strongly expressed in meiotic and in post-meiotic germ cells of the testis with highest expression at the elongated spermatid stage (at protein level). Expressed in testis and heart. Expressed in germ cells and genital ridges. Not detected in testicular tumors.

Its subcellular location is the nucleus. The protein localises to the cytoplasm. RNA-binding factor that positively regulates gene expression by prohibiting miRNA-mediated gene suppression. Relieves miRNA repression in germline cells. Prohibits the function of several miRNAs by blocking the accessibility of target mRNAs. Sequence-specific RNA-binding factor that binds specifically to U-rich regions (URRs) in the 3' untranslated region (3'-UTR) of several mRNAs. Does not bind to miRNAs. Isoform 1 may play a role during primordial germ cell (PGC) survival. However, does not seem to be essential for PGC migration. This chain is Dead end protein homolog 1 (Dnd1), found in Mus musculus (Mouse).